A 451-amino-acid chain; its full sequence is Probable D-serine dehydratase (451 aa).

The segment at 1 to 55 is disordered; that stretch reads MPGRTRPSCRLAITFTPRPDSATPRAGRAAPATGRRSNRSRSTLSATASPMPRRP. Over residues 22–35 the composition is skewed to low complexity; it reads ATPRAGRAAPATGR. Lys-118 is modified (N6-(pyridoxal phosphate)lysine).

Belongs to the serine/threonine dehydratase family. DsdA subfamily. It depends on pyridoxal 5'-phosphate as a cofactor.

The catalysed reaction is D-serine = pyruvate + NH4(+). In Paracidovorax citrulli (strain AAC00-1) (Acidovorax citrulli), this protein is Probable D-serine dehydratase.